The following is a 194-amino-acid chain: Rho-related protein racC (194 aa).

Positions 17, 19, 20, 21, 22, 34, 36, 39, 64, 120, 122, 163, and 164 each coordinate GTP. Thr21 lines the Mg(2+) pocket. 2 consecutive short sequence motifs (switch) follow at residues 30 to 41 (RKFPEDYIPTVF) and 61 to 79 (DTAGQEEYDQLRPLSYSSA). Thr39 serves as a coordination point for Mg(2+). Cys191 carries the cysteine methyl ester modification. A lipid anchor (S-geranylgeranyl cysteine) is attached at Cys191. Positions 192–194 (ALL) are cleaved as a propeptide — removed in mature form.

This sequence belongs to the small GTPase superfamily. Rho family. In terms of assembly, interacts (GTP-bound form) with PAK4 (via CRIB domain). Interacts (GTP-bound form) with PAK5 (via CRIB domain). It depends on Mg(2+) as a cofactor.

It is found in the cell membrane. The protein resides in the cytoplasm. It localises to the cytoskeleton. It carries out the reaction GTP + H2O = GDP + phosphate + H(+). Regulated by guanine nucleotide exchange factors (GEFs) which promote the exchange of bound GDP for free GTP, GTPase activating proteins (GAPs) which increase the GTP hydrolysis activity, and GDP dissociation inhibitors which inhibit the dissociation of the nucleotide from the GTPase. Small GTPase which cycles between active GTP-bound and inactive GDP-bound states. The protein is Rho-related protein racC of Entamoeba histolytica (strain ATCC 30459 / HM-1:IMSS / ABRM).